The chain runs to 68 residues: MKFTATFLMMFIFVLMVEPGECGWGSIFKHGRHAAKHIGHAAVNHYLGEQQDLDKRAVDEDPNVIVFE.

Positions Met1–Cys22 are cleaved as a signal peptide. A propeptide spanning residues Gly48 to Glu68 is cleaved from the precursor.

It belongs to the pleurocidin family.

It is found in the secreted. Antimicrobial peptide. This chain is Pleurocidin-like peptide WF4 (ple4), found in Pseudopleuronectes americanus (Winter flounder).